We begin with the raw amino-acid sequence, 445 residues long: Fasciclin-like arabinogalactan protein 16 (445 aa).

Residues 1-23 form the signal peptide; sequence MDSSYGATKFLLLLFLTTSIATA. FAS1 domains lie at 35–173 and 257–400; these read NSNS…ERLL and VKDF…DGVL. Asn72 and Asn279 each carry an N-linked (GlcNAc...) asparagine glycan.

Belongs to the fasciclin-like AGP family.

It is found in the secreted. Its function is as follows. May be a cell surface adhesion protein. This Arabidopsis thaliana (Mouse-ear cress) protein is Fasciclin-like arabinogalactan protein 16 (FLA16).